The sequence spans 506 residues: Histidine ammonia-lyase (506 aa).

The segment at residues Ala143–Gly145 is a cross-link (5-imidazolinone (Ala-Gly)). At Ser144 the chain carries 2,3-didehydroalanine (Ser).

Belongs to the PAL/histidase family. Post-translationally, contains an active site 4-methylidene-imidazol-5-one (MIO), which is formed autocatalytically by cyclization and dehydration of residues Ala-Ser-Gly.

It localises to the cytoplasm. It catalyses the reaction L-histidine = trans-urocanate + NH4(+). The protein operates within amino-acid degradation; L-histidine degradation into L-glutamate; N-formimidoyl-L-glutamate from L-histidine: step 1/3. In Salmonella paratyphi B (strain ATCC BAA-1250 / SPB7), this protein is Histidine ammonia-lyase.